Reading from the N-terminus, the 419-residue chain is Putative BTB/POZ domain-containing protein L85 (419 aa).

The region spanning 16–89 (TDLTIVLKDD…FYDKTSTNSE (74 aa)) is the BTB domain. Residues 250–290 (SSSNDSDEDASETESEHNSETESEHNSETESEHNSETESKH) form a disordered region. A compositionally biased stretch (basic and acidic residues) spans 263–290 (ESEHNSETESEHNSETESEHNSETESKH).

This sequence belongs to the mimivirus BTB/WD family.

This is Putative BTB/POZ domain-containing protein L85 from Acanthamoeba polyphaga (Amoeba).